The following is a 298-amino-acid chain: MDQKQIEEIVRSVMASMGQDVPQPVAPSMQEGAKPQCAAPTVTESCALDLGSAEAKAWIGVENPHRADVLTELRRSTAARVCTGRAGPRPRTQALLRFLADHSRSKDTVLKEVPEEWVKAQGLLEVRSEISDKNLYLTRPDMGRRLSPEAIDALKSQCVMNPDVQVVVSDGLSTDAITANYEEILPPLLAGLKQAGLNVGTPFFVRYGRVKIEDQIGEILGAKVVILLVGERPGLGQSESLSCYAVYSPRVASTVEADRTCISNIHQGGTPPVEAAAVIVDLAKRMLEQKASGINMTR.

Adenosylcob(III)alamin is bound by residues Val-210, Glu-231, and Cys-261.

This sequence belongs to the EutC family. The basic unit is a heterodimer which dimerizes to form tetramers. The heterotetramers trimerize; 6 large subunits form a core ring with 6 small subunits projecting outwards. Adenosylcob(III)alamin serves as cofactor.

Its subcellular location is the bacterial microcompartment. The enzyme catalyses ethanolamine = acetaldehyde + NH4(+). The protein operates within amine and polyamine degradation; ethanolamine degradation. Functionally, catalyzes the deamination of various vicinal amino-alcohols to oxo compounds. Allows this organism to utilize ethanolamine as the sole source of nitrogen and carbon in the presence of external vitamin B12. The chain is Ethanolamine ammonia-lyase small subunit from Salmonella heidelberg (strain SL476).